We begin with the raw amino-acid sequence, 225 residues long: UPF0173 metal-dependent hydrolase Pcal_1074 (225 aa).

Belongs to the UPF0173 family.

This is UPF0173 metal-dependent hydrolase Pcal_1074 from Pyrobaculum calidifontis (strain DSM 21063 / JCM 11548 / VA1).